The chain runs to 379 residues: Sterol 24-C-methyltransferase erg-4 (379 aa).

Belongs to the class I-like SAM-binding methyltransferase superfamily. Erg6/SMT family.

The catalysed reaction is lanosterol + S-adenosyl-L-methionine = eburicol + S-adenosyl-L-homocysteine + H(+). It participates in steroid metabolism; ergosterol biosynthesis. Functionally, catalyzes the methyl transfer from S-adenosyl-methionine to the C-24 of lanosterol to form eburicol. This chain is Sterol 24-C-methyltransferase erg-4, found in Neurospora crassa (strain ATCC 24698 / 74-OR23-1A / CBS 708.71 / DSM 1257 / FGSC 987).